Consider the following 1306-residue polypeptide: Putative late blight resistance protein homolog R1A-10 (1306 aa).

2 coiled-coil regions span residues 407 to 428 (SDSLAFLKNQLQVIQTEFESLQ) and 520 to 542 (PRMKEEIVGFEDVIENLRKKLLS). Positions 521–808 (RMKEEIVGFE…SEAFIKSSEG (288 aa)) constitute an NB-ARC domain. An ATP-binding site is contributed by 554-561 (GMPGLGKT). 11 LRR repeats span residues 858–881 (AEENFLLWINRDQITKPSSCVYSH), 921–935 (LSSLHDFSISRILPN), 936–961 (FKFLKVLDLEHRVFIDFIPTELPYLR), 979–1007 (LWNLETLILNRRSADSHNRVLLPSTVWDM), 1010–1035 (LRHLHIPNFSPENKKALLKNSPNLDD), 1057–1081 (TPNLRKLTCKVKCLEYLHQYHALNF), 1082–1106 (PIRLEILKLYRSNAFKAIPFCISAP), 1110–1129 (YLKLSGFYLDSQYLSKTADH), 1130–1153 (LKNLEVLKLYYVEFGDHREWKVSN), 1156–1181 (FPQLKILKLEDVSLMKWIVADDAFPN), and 1216–1240 (ESVVKSAMNIQETQVEDYQNTNFKL). Residues 1240–1306 (LVLIEKWPKF…KLRKCGMPGL (67 aa)) form the HMA domain.

It belongs to the disease resistance NB-LRR family.

The protein resides in the cytoplasm. It localises to the membrane. In terms of biological role, confers resistance to late blight (Phytophthora infestans) races carrying the avirulence gene Avr1. Resistance proteins guard the plant against pathogens that contain an appropriate avirulence protein via an indirect interaction with this avirulence protein. That triggers a defense system including the hypersensitive response, which restricts the pathogen growth. This is Putative late blight resistance protein homolog R1A-10 (R1A-10) from Solanum demissum (Wild potato).